The sequence spans 568 residues: 3-(3-hydroxy-phenyl)propionate/3-hydroxycinnamic acid hydroxylase (568 aa).

Residues 13–42 (DVVI…IVEE) and 278–288 (FRKGRMFLAGD) contribute to the FAD site.

The protein belongs to the PheA/TfdB FAD monooxygenase family. FAD serves as cofactor.

It carries out the reaction 3-(3-hydroxyphenyl)propanoate + NADH + O2 + H(+) = 3-(2,3-dihydroxyphenyl)propanoate + NAD(+) + H2O. It catalyses the reaction (2E)-3-(3-hydroxyphenyl)prop-2-enoate + NADH + O2 + H(+) = (2E)-3-(2,3-dihydroxyphenyl)prop-2-enoate + NAD(+) + H2O. Its pathway is aromatic compound metabolism; 3-phenylpropanoate degradation. Catalyzes the insertion of one atom of molecular oxygen into position 2 of the phenyl ring of 3-(3-hydroxyphenyl)propionate (3-HPP) and hydroxycinnamic acid (3HCI). This is 3-(3-hydroxy-phenyl)propionate/3-hydroxycinnamic acid hydroxylase from Mycobacterium sp. (strain JLS).